The following is a 240-amino-acid chain: FMN-dependent NADH:quinone oxidoreductase 2 (240 aa).

Residues Ser-10 and 23–25 contribute to the FMN site; that span reads SIS.

This sequence belongs to the azoreductase type 1 family. As to quaternary structure, homodimer. It depends on FMN as a cofactor.

The catalysed reaction is 2 a quinone + NADH + H(+) = 2 a 1,4-benzosemiquinone + NAD(+). The enzyme catalyses N,N-dimethyl-1,4-phenylenediamine + anthranilate + 2 NAD(+) = 2-(4-dimethylaminophenyl)diazenylbenzoate + 2 NADH + 2 H(+). In terms of biological role, quinone reductase that provides resistance to thiol-specific stress caused by electrophilic quinones. Functionally, also exhibits azoreductase activity. Catalyzes the reductive cleavage of the azo bond in aromatic azo compounds to the corresponding amines. The sequence is that of FMN-dependent NADH:quinone oxidoreductase 2 from Idiomarina loihiensis (strain ATCC BAA-735 / DSM 15497 / L2-TR).